The chain runs to 430 residues: Asparagine--tRNA ligase (430 aa).

The protein belongs to the class-II aminoacyl-tRNA synthetase family. In terms of assembly, homodimer.

Its subcellular location is the cytoplasm. It carries out the reaction tRNA(Asn) + L-asparagine + ATP = L-asparaginyl-tRNA(Asn) + AMP + diphosphate + H(+). The polypeptide is Asparagine--tRNA ligase (Listeria innocua serovar 6a (strain ATCC BAA-680 / CLIP 11262)).